The chain runs to 826 residues: Prominin-1-A (826 aa).

3 helical membrane-spanning segments follow: residues 50–70, 106–126, and 153–173; these read YYEPGAIGILFNMMHAFLFVV, VVCAALGLLFTVLLPLVGLLF, and LLTTLLLTTTFIITAGVLCAY. N-linked (GlcNAc...) asparagine glycosylation is found at Asn-178, Asn-268, Asn-286, Asn-327, Asn-388, and Asn-404. The next 2 membrane-spanning stretches (helical) occupy residues 439–459 and 483–503; these read CMIVLILTFNFLGLLCGILGF and VGFSFLFSWVLMGVITALFLA. 4 N-linked (GlcNAc...) asparagine glycosylation sites follow: Asn-576, Asn-582, Asn-617, and Asn-693.

It belongs to the prominin family.

The protein localises to the apical cell membrane. It localises to the cell projection. Its subcellular location is the microvillus membrane. The protein resides in the endoplasmic reticulum. It is found in the endoplasmic reticulum-Golgi intermediate compartment. Functionally, may play a role in cell differentiation, proliferation and apoptosis. Binds cholesterol in cholesterol-containing plasma membrane microdomains and may play a role in the organization of the apical plasma membrane in epithelial cells. Involved in regulation of MAPK and Akt signaling pathways. This is Prominin-1-A (prom1a) from Danio rerio (Zebrafish).